We begin with the raw amino-acid sequence, 1673 residues long: Calmodulin-binding transcription activator 1 (1673 aa).

Residues 63–188 (KCSSLPKERH…YLNVPAIEDC (126 aa)) constitute a DNA-binding region (CG-1). A Nuclear localization signal motif is present at residues 112–119 (RKKVKYRK). Residues 283–375 (HRIISPKVEP…LNSDPDMVDS (93 aa)) are disordered. Over residues 302 to 313 (EVQHNDVSEGKH) the composition is skewed to basic and acidic residues. The span at 337–367 (HQSSTEVSSTNQVEVPDTTQSSPVSISSGLN) shows a compositional bias: polar residues. One can recognise an IPT/TIG domain in the interval 875–953 (DYSPEWSYPE…ISNSVVFEYK (79 aa)). Positions 990-1021 (MAEMTGSQQHKQASGGGSSGGGSGSGNGGSQA) are disordered. The span at 1003–1018 (SGGGSSGGGSGSGNGG) shows a compositional bias: gly residues. ANK repeat units follow at residues 1064 to 1093 (RGMT…KHAD), 1109 to 1129 (FSCT…AVVL), and 1143 to 1172 (LGRL…DEQA). Disordered stretches follow at residues 1215-1246 (ASTN…PKKH) and 1264-1317 (ALSL…GSQP). Residues 1273–1289 (RKQSPSSKQSVPETLSP) show a composition bias toward polar residues. IQ domains are found at residues 1547-1576 (QEVA…AAIL), 1577-1599 (IQSK…AAVL), and 1600-1622 (IQKY…TAVI).

Belongs to the CAMTA family. As to quaternary structure, may interact with calmodulin. Normally expressed in non-neoplastic adult central nervous system tissues: detected in whole brain, cerebellum, brain cortex, occipital lobe, frontal lobe, temporal lobe, putamen. Expression levels are low in oligodendroglial tumors, and are reduced by half in oligodendroglioma and astrocytoma cases with 1p loss of heterozygosity. Detected in neuroblastic-type cultured neuroblastoma cells. Expressed in heart and kidney.

It localises to the nucleus. It is found in the cytoplasm. Transcriptional activator. The sequence is that of Calmodulin-binding transcription activator 1 from Homo sapiens (Human).